We begin with the raw amino-acid sequence, 121 residues long: MARVKRGVTTHARHKKILKLAKGYRGRAKSCYRIALQRVEKALQYAYRDRRTRKRDFRSLWIIRINAAAREHGLTYGRFMHGLTLAGIDLNRKILAEMAVNYKDDFAKLVETVSGKLAENS.

It belongs to the bacterial ribosomal protein bL20 family.

Its function is as follows. Binds directly to 23S ribosomal RNA and is necessary for the in vitro assembly process of the 50S ribosomal subunit. It is not involved in the protein synthesizing functions of that subunit. The sequence is that of Large ribosomal subunit protein bL20 from Wolbachia sp. subsp. Drosophila simulans (strain wRi).